Here is a 121-residue protein sequence, read N- to C-terminus: Immunoglobulin kappa variable 2-40 (121 aa).

A signal peptide spans 1–19 (MRLPAQLLGLLMLWVPGSS). The region spanning 20 to 121 (EDIVMTQTPL…YYCMQRIEFP (102 aa)) is the Ig-like domain. The segment at 21–43 (DIVMTQTPLSLPVTPGEPASISC) is framework-1. A disulfide bond links Cys-43 and Cys-114. Residues 44 to 60 (RSSQSLLDSDDGNTYLD) are complementarity-determining-1. The framework-2 stretch occupies residues 61 to 75 (WYLQKPGQSPQLLIY). Positions 76–82 (TLSYRAS) are complementarity-determining-2. The segment at 83–114 (GVPDRFSGSGSGTDFTLKISRVEAEDVGVYYC) is framework-3. Residues 115 to 121 (MQRIEFP) form a complementarity-determining-3 region.

In terms of assembly, immunoglobulins are composed of two identical heavy chains and two identical light chains; disulfide-linked.

It is found in the secreted. The protein resides in the cell membrane. Its function is as follows. V region of the variable domain of immunoglobulin light chains that participates in the antigen recognition. Immunoglobulins, also known as antibodies, are membrane-bound or secreted glycoproteins produced by B lymphocytes. In the recognition phase of humoral immunity, the membrane-bound immunoglobulins serve as receptors which, upon binding of a specific antigen, trigger the clonal expansion and differentiation of B lymphocytes into immunoglobulins-secreting plasma cells. Secreted immunoglobulins mediate the effector phase of humoral immunity, which results in the elimination of bound antigens. The antigen binding site is formed by the variable domain of one heavy chain, together with that of its associated light chain. Thus, each immunoglobulin has two antigen binding sites with remarkable affinity for a particular antigen. The variable domains are assembled by a process called V-(D)-J rearrangement and can then be subjected to somatic hypermutations which, after exposure to antigen and selection, allow affinity maturation for a particular antigen. This is Immunoglobulin kappa variable 2-40 from Homo sapiens (Human).